The primary structure comprises 229 residues: Histone H1 (229 aa).

Disordered regions lie at residues 1 to 52 (MADT…SSHP) and 125 to 229 (APAL…RTRK). The span at 32 to 45 (KEKKKVIAAKKPKS) shows a compositional bias: basic residues. An H15 domain is found at 50 to 119 (SHPSFFEMIS…KVKNSFKLPS (70 aa)). Positions 125–138 (APALAKKPTIPKPK) are enriched in low complexity. Basic residues predominate over residues 139-160 (VAAKPKTAKIGAKPKAKAKVAA). Low complexity-rich tracts occupy residues 161 to 177 (KTKA…PAAK) and 185 to 205 (KPKT…VASP). The segment covering 206–229 (GKKKAVPVKKVKTVKSPAGKRTRK) has biased composition (basic residues).

It belongs to the histone H1/H5 family.

It is found in the nucleus. The protein resides in the chromosome. Its function is as follows. Histones H1 are necessary for the condensation of nucleosome chains into higher-order structures. In Euphorbia esula (Leafy spurge), this protein is Histone H1.